The following is a 341-amino-acid chain: Anthranilate phosphoribosyltransferase (341 aa).

Residues Gly79, 82 to 83, Thr87, 89 to 92, 107 to 115, and Ser119 each bind 5-phospho-alpha-D-ribose 1-diphosphate; these read GD, NIST, and KHGNRSISS. Position 79 (Gly79) interacts with anthranilate. Ser91 serves as a coordination point for Mg(2+). Position 110 (Asn110) interacts with anthranilate. Arg164 contacts anthranilate. Residues Asp222 and Glu223 each contribute to the Mg(2+) site.

Belongs to the anthranilate phosphoribosyltransferase family. In terms of assembly, homodimer. Mg(2+) serves as cofactor.

It carries out the reaction N-(5-phospho-beta-D-ribosyl)anthranilate + diphosphate = 5-phospho-alpha-D-ribose 1-diphosphate + anthranilate. The protein operates within amino-acid biosynthesis; L-tryptophan biosynthesis; L-tryptophan from chorismate: step 2/5. Its function is as follows. Catalyzes the transfer of the phosphoribosyl group of 5-phosphorylribose-1-pyrophosphate (PRPP) to anthranilate to yield N-(5'-phosphoribosyl)-anthranilate (PRA). This chain is Anthranilate phosphoribosyltransferase, found in Blochmanniella pennsylvanica (strain BPEN).